Consider the following 485-residue polypeptide: Glutathione gamma-glutamylcysteinyltransferase 1 (485 aa).

Residues 1 to 221 (MAMASLYRRS…GFMLISRPHR (221 aa)) enclose the Peptidase C83 domain. Active-site residues include Cys56, His162, and Asp180.

The protein belongs to the phytochelatin synthase family. In terms of tissue distribution, expressed in roots and shoots.

It carries out the reaction [Glu(-Cys)](n)-Gly + glutathione + H(+) = [Glu(-Cys)](n+1)-Gly + glycine. Its activity is regulated as follows. Requires cadmium for activity. Also activated in vitro or in heterologous system by Ag(+), Hg(+), Zn(2+), Cu(2+), Fe(2+) or Fe(3+) ions, but not by Co(2+) or Ni(2+) ions. Functionally, involved in the synthesis of phytochelatins (PC) and homophytochelatins (hPC), the heavy-metal-binding peptides of plants. Also involved in glutathione-conjugates degradation. This Arabidopsis thaliana (Mouse-ear cress) protein is Glutathione gamma-glutamylcysteinyltransferase 1 (PCS1).